A 332-amino-acid polypeptide reads, in one-letter code: Melanocortin receptor 4 (332 aa).

The Extracellular portion of the chain corresponds to 1-43 (MNSTHHHGMHTSLHFWNRSTYGLHSNASEPLGKGYSEGGCYEQ). N-linked (GlcNAc...) asparagine glycosylation is found at asparagine 2, asparagine 17, and asparagine 26. Intrachain disulfides connect cysteine 40/cysteine 279 and cysteine 271/cysteine 277. Residues 44 to 69 (LFVSPEVFVTLGVISLLENILVIVAI) form a helical membrane-spanning segment. The Cytoplasmic portion of the chain corresponds to 70–81 (AKNKNLHSPMYF). The chain crosses the membrane as a helical span at residues 82-106 (FICSLAVADMLVSVSNGSETIVITL). Positions 100, 122, and 126 each coordinate Ca(2+). The Extracellular portion of the chain corresponds to 107 to 123 (LNSTDTDAQSFTVNIDN). A helical transmembrane segment spans residues 124-145 (VIDSVICSSLLASICSLLSIAV). The Cytoplasmic portion of the chain corresponds to 146-165 (DRYFTIFYALQYHNIMTVKR). Residues 166–186 (VGIIISCIWAVCTVSGVLFII) form a helical membrane-spanning segment. The Extracellular segment spans residues 187-191 (YSDSS). Residues 192 to 215 (AVIICLITVFFTMLALMASLYVHM) traverse the membrane as a helical segment. The Cytoplasmic segment spans residues 216-248 (FLMARLHIKRIAVLPGTGTIRQGANMKGAITLT). The helical transmembrane segment at 249–271 (ILIGVFVVCWAPFFLHLIFYISC) threads the bilayer. The Extracellular portion of the chain corresponds to 272-280 (PQNPYCVCF). The helical transmembrane segment at 281 to 304 (MSHFNLYLILIMCNSIIDPLIYAL) threads the bilayer. Topologically, residues 305 to 332 (RSQELRKTFKEIICCYPLGGLCDLSSRY) are cytoplasmic. Cysteine 318 carries the S-palmitoyl cysteine lipid modification.

This sequence belongs to the G-protein coupled receptor 1 family. Homodimer; disulfide-linked, also forms higher order oligomers. Interacts with GNAS. Interacts with ATRNL1. Interacts with MGRN1; this interaction competes with GNAS-binding and thus inhibits agonist-induced cAMP production. Interacts with MRAP and MRAP2; these associated factors increase ligand-sensitivity and generation of cAMP.

It is found in the cell membrane. Hormone receptor that acts as a key component of the leptin-melanocortin pathway at the intersection of homeostatic maintenance of energetic state. Plays a role in regulating food intake: activation by a stimulating hormone such as anorexigenic alpha-melanocyte stimulating hormone (alpha-MSH) inhibits appetite, whereas binding to a natural antagonist like Agouti-related protein/AGRP promotes appetite. G-protein-coupled receptor that activates conventional Galphas signaling leading to induction of anorexogenic signaling in the hypothalamus to result in negative energy balance. Regulates the firing activity of neurons from the hypothalamus by alpha-MSH and AGRP independently of Galphas signaling by ligand-induced coupling of closure of inwardly rectifying potassium channel KCNJ13. In intestinal epithelial cells, plays a role in the inhibition of hepatic glucose production via nesfatin-1/NUCB2 leading to increased cyclic adenosine monophosphate (cAMP) levels and glucagon-like peptide 1 (GLP-1) secretion in the intestinal epithelium. The polypeptide is Melanocortin receptor 4 (MC4R) (Sus scrofa (Pig)).